The chain runs to 187 residues: BCL2/adenovirus E1B 19 kDa protein-interacting protein 3 (187 aa).

A disordered region spans residues 42-86; it reads LDAQHESGRSSSKSSHCDSPPRSQTPQDTNRAEIDSHSFGEKNST. A phosphoserine mark is found at Ser48, Ser60, Ser77, Ser79, Ser85, and Ser88. The segment covering 50–63 has biased composition (low complexity); that stretch reads RSSSKSSHCDSPPR. Residues 71–81 show a composition bias toward basic and acidic residues; the sequence is NRAEIDSHSFG. The BH3 signature appears at 93 to 118; it reads IERRREVESILKKNSDWIWDWSSRPE. The chain crosses the membrane as a helical span at residues 157–177; that stretch reads VFLPSLLLSHLLAIGLGIYIG.

This sequence belongs to the NIP3 family. As to quaternary structure, homodimer. Binds to BCL2. Interacts with BNIP3L and ACAA2. Interacts (via BH3 domain) with SPATA18 (via coiled-coil domains). Interacts with BOK; promotes BOK oligomerization. Interacts with PPTC7; this interaction promotes BNIP3 degradation.

Its subcellular location is the mitochondrion. It localises to the mitochondrion outer membrane. Its function is as follows. Apoptosis-inducing protein that can overcome BCL2 suppression. May play a role in repartitioning calcium between the two major intracellular calcium stores in association with BCL2. Involved in mitochondrial quality control via its interaction with SPATA18/MIEAP: in response to mitochondrial damage, participates in mitochondrial protein catabolic process (also named MALM) leading to the degradation of damaged proteins inside mitochondria. The physical interaction of SPATA18/MIEAP, BNIP3 and BNIP3L/NIX at the mitochondrial outer membrane may play a critical role in the translocation of lysosomal proteins from the cytoplasm to the mitochondrial matrix. The physical interaction of SPATA18/MIEAP, BNIP3 and BNIP3L/NIX at the mitochondrial outer membrane regulates the opening of a pore in the mitochondrial double membrane in order to mediate the translocation of lysosomal proteins from the cytoplasm to the mitochondrial matrix. Plays an important role in the calprotectin (S100A8/A9)-induced cell death pathway. The polypeptide is BCL2/adenovirus E1B 19 kDa protein-interacting protein 3 (Mus musculus (Mouse)).